We begin with the raw amino-acid sequence, 229 residues long: Protein-L-isoaspartate O-methyltransferase (229 aa).

The active site involves S78.

It belongs to the methyltransferase superfamily. L-isoaspartyl/D-aspartyl protein methyltransferase family.

It is found in the cytoplasm. It catalyses the reaction [protein]-L-isoaspartate + S-adenosyl-L-methionine = [protein]-L-isoaspartate alpha-methyl ester + S-adenosyl-L-homocysteine. Catalyzes the methyl esterification of L-isoaspartyl residues in peptides and proteins that result from spontaneous decomposition of normal L-aspartyl and L-asparaginyl residues. It plays a role in the repair and/or degradation of damaged proteins. This is Protein-L-isoaspartate O-methyltransferase from Chromohalobacter salexigens (strain ATCC BAA-138 / DSM 3043 / CIP 106854 / NCIMB 13768 / 1H11).